We begin with the raw amino-acid sequence, 1029 residues long: Carbamoyl phosphate synthase large chain (1029 aa).

Positions 1–402 (MPKRTDLQTI…SLQKALRSTE (402 aa)) are carboxyphosphate synthetic domain. The ATP site is built by Arg129, Arg169, Gly175, Gly176, Glu208, Ile210, Glu215, Gly241, Val242, His243, Gln285, and Glu299. Residues 133–328 (QAAMKKIGVE…IAKIAALLAV (196 aa)) enclose the ATP-grasp 1 domain. 3 residues coordinate Mg(2+): Gln285, Glu299, and Asn301. Gln285, Glu299, and Asn301 together coordinate Mn(2+). Positions 403–546 (SDVRGAFAEM…YSTYEWEDEV (144 aa)) are oligomerization domain. Residues 547 to 929 (TPTDKPKVVI…AYYRAELGAK (383 aa)) form a carbamoyl phosphate synthetic domain region. One can recognise an ATP-grasp 2 domain in the interval 671–863 (NALCERLGLP…LAKYAARIAV (193 aa)). The ATP site is built by Arg707, Gln747, Leu749, Glu754, Gly779, Val780, His781, Ser782, Gln822, and Glu834. Mg(2+) contacts are provided by Gln822, Glu834, and Asn836. Mn(2+) is bound by residues Gln822, Glu834, and Asn836. Positions 930–1028 (SNLPLSGTAL…QAWQQREAAA (99 aa)) constitute an MGS-like domain. The segment at 930 to 1029 (SNLPLSGTAL…AWQQREAAAS (100 aa)) is allosteric domain.

This sequence belongs to the CarB family. In terms of assembly, composed of two chains; the small (or glutamine) chain promotes the hydrolysis of glutamine to ammonia, which is used by the large (or ammonia) chain to synthesize carbamoyl phosphate. Tetramer of heterodimers (alpha,beta)4. Requires Mg(2+) as cofactor. It depends on Mn(2+) as a cofactor.

The enzyme catalyses hydrogencarbonate + L-glutamine + 2 ATP + H2O = carbamoyl phosphate + L-glutamate + 2 ADP + phosphate + 2 H(+). The catalysed reaction is hydrogencarbonate + NH4(+) + 2 ATP = carbamoyl phosphate + 2 ADP + phosphate + 2 H(+). The protein operates within amino-acid biosynthesis; L-arginine biosynthesis; carbamoyl phosphate from bicarbonate: step 1/1. Its pathway is pyrimidine metabolism; UMP biosynthesis via de novo pathway; (S)-dihydroorotate from bicarbonate: step 1/3. In terms of biological role, large subunit of the glutamine-dependent carbamoyl phosphate synthetase (CPSase). CPSase catalyzes the formation of carbamoyl phosphate from the ammonia moiety of glutamine, carbonate, and phosphate donated by ATP, constituting the first step of 2 biosynthetic pathways, one leading to arginine and/or urea and the other to pyrimidine nucleotides. The large subunit (synthetase) binds the substrates ammonia (free or transferred from glutamine from the small subunit), hydrogencarbonate and ATP and carries out an ATP-coupled ligase reaction, activating hydrogencarbonate by forming carboxy phosphate which reacts with ammonia to form carbamoyl phosphate. In Deinococcus geothermalis (strain DSM 11300 / CIP 105573 / AG-3a), this protein is Carbamoyl phosphate synthase large chain.